Reading from the N-terminus, the 221-residue chain is Prolactin-3B1 (221 aa).

The first 30 residues, M1–S30, serve as a signal peptide directing secretion. Disulfide bonds link C81–C196 and C213–C221.

It belongs to the somatotropin/prolactin family.

It is found in the secreted. This Mesocricetus auratus (Golden hamster) protein is Prolactin-3B1 (PRL3B1).